Consider the following 272-residue polypeptide: Shikimate dehydrogenase (NADP(+)) (272 aa).

Shikimate-binding positions include 14 to 16 (SKS) and T61. Catalysis depends on K65, which acts as the Proton acceptor. E77 contacts NADP(+). Positions 86 and 102 each coordinate shikimate. NADP(+) is bound by residues 126–130 (GAGGA), 150–155 (NRTFSK), and M213. Residue Y215 participates in shikimate binding. G237 contributes to the NADP(+) binding site.

The protein belongs to the shikimate dehydrogenase family. As to quaternary structure, homodimer.

It carries out the reaction shikimate + NADP(+) = 3-dehydroshikimate + NADPH + H(+). Its pathway is metabolic intermediate biosynthesis; chorismate biosynthesis; chorismate from D-erythrose 4-phosphate and phosphoenolpyruvate: step 4/7. In terms of biological role, involved in the biosynthesis of the chorismate, which leads to the biosynthesis of aromatic amino acids. Catalyzes the reversible NADPH linked reduction of 3-dehydroshikimate (DHSA) to yield shikimate (SA). This chain is Shikimate dehydrogenase (NADP(+)), found in Psychromonas ingrahamii (strain DSM 17664 / CCUG 51855 / 37).